A 214-amino-acid polypeptide reads, in one-letter code: Uridine kinase (214 aa).

Residue 15-22 (GASASGKS) participates in ATP binding.

Belongs to the uridine kinase family.

It is found in the cytoplasm. It catalyses the reaction uridine + ATP = UMP + ADP + H(+). It carries out the reaction cytidine + ATP = CMP + ADP + H(+). Its pathway is pyrimidine metabolism; CTP biosynthesis via salvage pathway; CTP from cytidine: step 1/3. The protein operates within pyrimidine metabolism; UMP biosynthesis via salvage pathway; UMP from uridine: step 1/1. In Aeromonas hydrophila subsp. hydrophila (strain ATCC 7966 / DSM 30187 / BCRC 13018 / CCUG 14551 / JCM 1027 / KCTC 2358 / NCIMB 9240 / NCTC 8049), this protein is Uridine kinase.